A 581-amino-acid chain; its full sequence is UvrABC system protein C (581 aa).

Residues 15–94 form the GIY-YIG domain; the sequence is REPGVYLFEQ…IKRHRPPYNV (80 aa). The UVR domain occupies 202–237; it reads GVLADPLRREMEAAAQNQEFERAANLRDKLGAVEAL.

Belongs to the UvrC family. As to quaternary structure, interacts with UvrB in an incision complex.

Its subcellular location is the cytoplasm. Its function is as follows. The UvrABC repair system catalyzes the recognition and processing of DNA lesions. UvrC both incises the 5' and 3' sides of the lesion. The N-terminal half is responsible for the 3' incision and the C-terminal half is responsible for the 5' incision. The chain is UvrABC system protein C from Haloarcula marismortui (strain ATCC 43049 / DSM 3752 / JCM 8966 / VKM B-1809) (Halobacterium marismortui).